The sequence spans 177 residues: Putative pre-16S rRNA nuclease (177 aa).

It belongs to the YqgF nuclease family.

The protein resides in the cytoplasm. In terms of biological role, could be a nuclease involved in processing of the 5'-end of pre-16S rRNA. The polypeptide is Putative pre-16S rRNA nuclease (Psychrobacter sp. (strain PRwf-1)).